The primary structure comprises 265 residues: tRNA pseudouridine synthase A (265 aa).

The active-site Nucleophile is the D58. Y116 is a binding site for substrate.

Belongs to the tRNA pseudouridine synthase TruA family. In terms of assembly, homodimer.

It catalyses the reaction uridine(38/39/40) in tRNA = pseudouridine(38/39/40) in tRNA. In terms of biological role, formation of pseudouridine at positions 38, 39 and 40 in the anticodon stem and loop of transfer RNAs. The protein is tRNA pseudouridine synthase A of Neisseria meningitidis serogroup C (strain 053442).